A 312-amino-acid polypeptide reads, in one-letter code: MSIVETCISFVSTNPFYPFCTGLLLNCVVTPLYFWKTQNGRIVVVSLLQFVVLYATAFISIGTDKSLYRNKWVALPLSKKTRISRNTSLYCFKLKYPFERLHIPMGYHLAVRVTINGERLVRYYTPVNVPNTEGHLELVVKTYKHGVVSKYFDKLKIRQYVEFKGPLGELEYDQDTATELGIIAGGSGITPVLQVLQEIIPSPEDLTHISLIYANETEDDILMKSQLDHMAKEYPHFKVHYVIHKPNGKWNGDVGYVTLEEMKRYLPKQAEDHRLLICGPPKMNEMVLNYAKELGWSNGFHKGNGTDKVFVF.

The Extracellular portion of the chain corresponds to 1–14 (MSIVETCISFVSTN). The helical transmembrane segment at 15 to 35 (PFYPFCTGLLLNCVVTPLYFW) threads the bilayer. Residues 36-41 (KTQNGR) lie on the Cytoplasmic side of the membrane. A helical membrane pass occupies residues 42-62 (IVVVSLLQFVVLYATAFISIG). Residues 63–179 (TDKSLYRNKW…LEYDQDTATE (117 aa)) lie on the Extracellular side of the membrane. Residues 70–173 (NKWVALPLSK…KGPLGELEYD (104 aa)) form the FAD-binding FR-type domain. Residues 180–200 (LGIIAGGSGITPVLQVLQEII) form a helical membrane-spanning segment. At 201–312 (PSPEDLTHIS…GNGTDKVFVF (112 aa)) the chain is on the cytoplasmic side.

Belongs to the flavoprotein pyridine nucleotide cytochrome reductase family. It depends on FAD as a cofactor.

It localises to the membrane. This is an uncharacterized protein from Saccharomyces cerevisiae (strain ATCC 204508 / S288c) (Baker's yeast).